Here is a 116-residue protein sequence, read N- to C-terminus: Large ribosomal subunit protein uL18 (116 aa).

It belongs to the universal ribosomal protein uL18 family. As to quaternary structure, part of the 50S ribosomal subunit; part of the 5S rRNA/L5/L18/L25 subcomplex. Contacts the 5S and 23S rRNAs.

This is one of the proteins that bind and probably mediate the attachment of the 5S RNA into the large ribosomal subunit, where it forms part of the central protuberance. This is Large ribosomal subunit protein uL18 from Mycoplasma mycoides subsp. mycoides SC (strain CCUG 32753 / NCTC 10114 / PG1).